An 88-amino-acid chain; its full sequence is Gas vesicle protein A2 (88 aa).

Belongs to the gas vesicle GvpA family. The gas vesicle shell is 2 nm thick and consists of a single layer of this protein. It forms helical ribs nearly perpendicular to the long axis of the vesicle.

The protein resides in the gas vesicle shell. In terms of biological role, gas vesicles are hollow, gas filled proteinaceous nanostructures found in some microorganisms. During planktonic growth they allow positioning of the organism at a favorable depth for light or nutrient acquisition. GvpA forms the protein shell. It is not clear if the 2 type A proteins in this organism are functionally redundant. Its function is as follows. When a minimal gvp locus (gvpA2-gvpR-gvpN-gvpF-gvpG-gvpL-gvpS-gvpK-gvpJ-gvpT-gvpU, called pNL29) is expressed in E.coli gas vesicles are made. The protein is Gas vesicle protein A2 of Priestia megaterium (Bacillus megaterium).